Here is a 454-residue protein sequence, read N- to C-terminus: MAAWKSWTALRLCATVVVLDMVVCKGFVEDLDESFKENRNDDIWLVDFYAPWCGHCKKLEPIWNEVGLEMKSIGSPVKVGKMDATSYSSIASEFGVRGYPTIKLLKGDLAYNYRGPRTKDDIIEFAHRVSGALIRPLPSQQMFEHMQKRHRVFFVYVGGESPLKEKYIDAASELIVYTYFFSASEEVVPEYVTLKEMPAVLVFKDETYFVYDEYEDGDLSSWINRERFQNYLAMDGFLLYELGDTGKLVALAVIDEKNTSVEHTRLKSIIQEVARDYRDLFHRDFQFGHMDGNDYINTLLMDELTVPTVVVLNTSNQQYFLLDRQIKNVEDMVQFINNILDGTVEAQGGDSILQRLKRIVFDAKSTIVSIFKSSPLMGCFLFGLPLGVISIMCYGIYTADTDGGYIEERYEVSKSENENQEQIEESKEQQEPSSGGSVVPTVQEPKDVLEKKKD.

The N-terminal stretch at 1–24 (MAAWKSWTALRLCATVVVLDMVVC) is a signal peptide. Residues 25–128 (KGFVEDLDES…KDDIIEFAHR (104 aa)) enclose the Thioredoxin domain. Residues 25–375 (KGFVEDLDES…TIVSIFKSSP (351 aa)) lie on the Lumenal side of the membrane. Residues Cys53 and Cys56 each act as nucleophile in the active site. An intrachain disulfide couples Cys53 to Cys56. Asn258 and Asn313 each carry an N-linked (GlcNAc...) asparagine glycan. The helical transmembrane segment at 376 to 396 (LMGCFLFGLPLGVISIMCYGI) threads the bilayer. The Cytoplasmic portion of the chain corresponds to 397–454 (YTADTDGGYIEERYEVSKSENENQEQIEESKEQQEPSSGGSVVPTVQEPKDVLEKKKD). The disordered stretch occupies residues 412–454 (VSKSENENQEQIEESKEQQEPSSGGSVVPTVQEPKDVLEKKKD). Residues 444–454 (EPKDVLEKKKD) show a composition bias toward basic and acidic residues. The Di-lysine motif signature appears at 451–454 (KKKD).

This sequence belongs to the protein disulfide isomerase family. Post-translationally, N-glycosylated. As to expression, widely expressed. Expressed in brain, testis, lung, skin, kidney, uterus, bone, stomach, liver, prostate, placenta, eye and muscle.

Its subcellular location is the endoplasmic reticulum membrane. It catalyses the reaction Catalyzes the rearrangement of -S-S- bonds in proteins.. In terms of biological role, probable disulfide isomerase, which participates in the folding of proteins containing disulfide bonds. May act as a dithiol oxidase. Acts as a regulator of endoplasmic reticulum-mitochondria contact sites via its ability to regulate redox signals. The protein is Protein disulfide-isomerase TMX3 (TMX3) of Homo sapiens (Human).